We begin with the raw amino-acid sequence, 361 residues long: Beta-hexosaminidase (361 aa).

Residues D69, R77, R144, and 174 to 175 each bind substrate; that span reads KH. The active-site Proton donor/acceptor is the H187. The active-site Nucleophile is D258.

Belongs to the glycosyl hydrolase 3 family. NagZ subfamily.

It localises to the cytoplasm. It catalyses the reaction Hydrolysis of terminal non-reducing N-acetyl-D-hexosamine residues in N-acetyl-beta-D-hexosaminides.. Its pathway is cell wall biogenesis; peptidoglycan recycling. Functionally, plays a role in peptidoglycan recycling by cleaving the terminal beta-1,4-linked N-acetylglucosamine (GlcNAc) from peptide-linked peptidoglycan fragments, giving rise to free GlcNAc, anhydro-N-acetylmuramic acid and anhydro-N-acetylmuramic acid-linked peptides. This is Beta-hexosaminidase from Neisseria gonorrhoeae (strain NCCP11945).